Here is a 472-residue protein sequence, read N- to C-terminus: PEP-dependent dihydroxyacetone kinase, phosphoryl donor subunit DhaM (472 aa).

Residues 1–135 (MVNLVIVSHS…HALEAKREQL (135 aa)) enclose the PTS EIIA type-4 domain. The active-site Tele-phosphohistidine intermediate is H9. The region spanning 155–242 (ARSLAVVIKN…QLAEDNFGET (88 aa)) is the HPr domain. H169 serves as the catalytic Pros-phosphohistidine intermediate. The PTS EI-like, N-terminal part stretch occupies residues 264–472 (QPVLCTVQAK…VKTQRFNRQG (209 aa)). Residue H430 is the Tele-phosphohistidine intermediate of the active site.

The protein belongs to the PEP-utilizing enzyme family. In terms of assembly, homodimer. The dihydroxyacetone kinase complex is composed of a homodimer of DhaM, a homodimer of DhaK and the subunit DhaL.

It catalyses the reaction dihydroxyacetone + phosphoenolpyruvate = dihydroxyacetone phosphate + pyruvate. Its pathway is polyol metabolism; glycerol degradation. Its function is as follows. Component of the dihydroxyacetone kinase complex, which is responsible for the phosphoenolpyruvate (PEP)-dependent phosphorylation of dihydroxyacetone. DhaM serves as the phosphoryl donor. Is phosphorylated by phosphoenolpyruvate in an EI- and HPr-dependent reaction, and a phosphorelay system on histidine residues finally leads to phosphoryl transfer to DhaL and dihydroxyacetone. The protein is PEP-dependent dihydroxyacetone kinase, phosphoryl donor subunit DhaM of Escherichia coli (strain K12).